The sequence spans 448 residues: Metacaspase-1 (448 aa).

The tract at residues 1-129 (MFPGQGRHTY…GHYSRPPTDS (129 aa)) is disordered. Positions 10–44 (YGGQQSNYSNQQQGYDQGYNQGYGQAYGQEYNQGY) are enriched in low complexity. Positions 61–70 (SGPPPGPPPG) are enriched in pro residues. Positions 99–114 (YGNNQTRGSGNEQNYG) are enriched in polar residues. Active-site residues include H231 and C292.

Belongs to the peptidase C14B family.

In terms of biological role, involved in cell death (apoptosis). This Candida albicans (strain SC5314 / ATCC MYA-2876) (Yeast) protein is Metacaspase-1 (MCA1).